The sequence spans 1222 residues: ATP-dependent helicase/nuclease subunit A (1222 aa).

Positions 39 to 495 (QKRTAQQIEA…ILLKENFRSQ (457 aa)) constitute a UvrD-like helicase ATP-binding domain. 60–67 (ASAGSGKT) is a binding site for ATP. The UvrD-like helicase C-terminal domain maps to 524-810 (QLIAGSHAQT…NLMTIHKSKG (287 aa)).

Belongs to the helicase family. AddA subfamily. Heterodimer of AddA and AddB/RexB. The cofactor is Mg(2+).

It catalyses the reaction Couples ATP hydrolysis with the unwinding of duplex DNA by translocating in the 3'-5' direction.. The catalysed reaction is ATP + H2O = ADP + phosphate + H(+). Its function is as follows. The heterodimer acts as both an ATP-dependent DNA helicase and an ATP-dependent, dual-direction single-stranded exonuclease. Recognizes the chi site generating a DNA molecule suitable for the initiation of homologous recombination. The AddA nuclease domain is required for chi fragment generation; this subunit has the helicase and 3' -&gt; 5' nuclease activities. The protein is ATP-dependent helicase/nuclease subunit A of Streptococcus pyogenes serotype M12 (strain MGAS2096).